Reading from the N-terminus, the 159-residue chain is Xanthine dehydrogenase iron-sulfur-binding subunit (159 aa).

Residues 7–82 enclose the 2Fe-2S ferredoxin-type domain; it reads ITIECTINGM…GKEIRTLEGE (76 aa). [2Fe-2S] cluster is bound by residues C44, C49, and C52.

As to quaternary structure, heterotrimer of XdhA, XdhB and XdhC. It depends on [2Fe-2S] cluster as a cofactor.

It participates in purine metabolism; hypoxanthine degradation; urate from hypoxanthine: step 1/2. In terms of biological role, iron-sulfur subunit of the xanthine dehydrogenase complex. This is Xanthine dehydrogenase iron-sulfur-binding subunit (xdhC) from Escherichia coli O157:H7.